We begin with the raw amino-acid sequence, 436 residues long: D-amino acid dehydrogenase (436 aa).

3–17 (ILILGSGVIGVTSAW) lines the FAD pocket.

The protein belongs to the DadA oxidoreductase family. The cofactor is FAD.

The enzyme catalyses a D-alpha-amino acid + A + H2O = a 2-oxocarboxylate + AH2 + NH4(+). It functions in the pathway amino-acid degradation; D-alanine degradation; NH(3) and pyruvate from D-alanine: step 1/1. Its function is as follows. Oxidative deamination of D-amino acids. This Photorhabdus laumondii subsp. laumondii (strain DSM 15139 / CIP 105565 / TT01) (Photorhabdus luminescens subsp. laumondii) protein is D-amino acid dehydrogenase.